The chain runs to 342 residues: MAERKLLEALNGRTVFPPPIWLMRQAGRYLPEYRETRKKAGSFLDLCYNPELAVEVTLQPIRRFGFDAAILFSDILVIPHALGRDLRFEEGAGPLMSPIQANEIPGLDPNLIHNRLQPVYETVRRLRSELSEETALIGFCGAPWTVATYMIAGRGTPDQAPARLFGYRHPKEFSELLDTISAASADYLIRQIDEGADAVQIFDSWAGILDETSFDQWCLRPVAEIVRRVRERHPNVPIIGFPKGAGWLYSRYRQQTGVTALGLDWTVPLSEASRLQAEGPVQGNLDPMRLVAGGQALSKGVEDILSALGGAPFIFNLGHGITPETPIGHVEAMIQQVREGRL.

Substrate contacts are provided by residues 24-28 (RQAGR), Asp74, Tyr149, Ser204, and His319.

This sequence belongs to the uroporphyrinogen decarboxylase family. As to quaternary structure, homodimer.

Its subcellular location is the cytoplasm. The catalysed reaction is uroporphyrinogen III + 4 H(+) = coproporphyrinogen III + 4 CO2. It functions in the pathway porphyrin-containing compound metabolism; protoporphyrin-IX biosynthesis; coproporphyrinogen-III from 5-aminolevulinate: step 4/4. Catalyzes the decarboxylation of four acetate groups of uroporphyrinogen-III to yield coproporphyrinogen-III. This Chelativorans sp. (strain BNC1) protein is Uroporphyrinogen decarboxylase.